The chain runs to 523 residues: 2-isopropylmalate synthase (523 aa).

The Pyruvate carboxyltransferase domain occupies 5 to 267 (VIIFDTTLRD…HTAINHQEIW (263 aa)). Asp14, His202, His204, and Asn238 together coordinate Mn(2+). Residues 392–523 (RLDYFSVQSG…QHNENNKETV (132 aa)) form a regulatory domain region.

It belongs to the alpha-IPM synthase/homocitrate synthase family. LeuA type 1 subfamily. Homodimer. Mn(2+) is required as a cofactor.

The protein resides in the cytoplasm. The enzyme catalyses 3-methyl-2-oxobutanoate + acetyl-CoA + H2O = (2S)-2-isopropylmalate + CoA + H(+). The protein operates within amino-acid biosynthesis; L-leucine biosynthesis; L-leucine from 3-methyl-2-oxobutanoate: step 1/4. Catalyzes the condensation of the acetyl group of acetyl-CoA with 3-methyl-2-oxobutanoate (2-ketoisovalerate) to form 3-carboxy-3-hydroxy-4-methylpentanoate (2-isopropylmalate). This chain is 2-isopropylmalate synthase, found in Escherichia coli O127:H6 (strain E2348/69 / EPEC).